Consider the following 874-residue polypeptide: Probable inorganic carbon transporter subunit DabA (874 aa).

Residues Cys398, Asp400, His580, and Cys595 each contribute to the Zn(2+) site.

Belongs to the inorganic carbon transporter (TC 9.A.2) DabA family. As to quaternary structure, forms a complex with DabB. Zn(2+) is required as a cofactor.

Its subcellular location is the cell membrane. Functionally, part of an energy-coupled inorganic carbon pump. This chain is Probable inorganic carbon transporter subunit DabA, found in Bacillus cereus (strain Q1).